Here is an 864-residue protein sequence, read N- to C-terminus: Leukocyte tyrosine kinase receptor (864 aa).

Positions 1-16 (MGCWGQLLVWFGAAGA) are cleaved as a signal peptide. The Extracellular segment spans residues 17-424 (ILCSSPGSQE…CMDLHKPPGP (408 aa)). Residues 30-40 (RSSPLPLASPS) show a composition bias toward low complexity. The interval 30-64 (RSSPLPLASPSPRDPKVSAPPSILEPASPLNSPGT) is disordered. Cystine bridges form between Cys-73–Cys-86 and Cys-168–Cys-179. The tract at residues 239–297 (YLRPRDRGRTQASPEKLENRSEAPGSGGRGGAAGGGGGWTSRAPSPQAGRSLQEGAEGG) is disordered. Positions 241–259 (RPRDRGRTQASPEKLENRS) are enriched in basic and acidic residues. An N-linked (GlcNAc...) asparagine glycan is attached at Asn-257. Positions 263–277 (GSGGRGGAAGGGGGW) are enriched in gly residues. A disulfide bridge connects residues Cys-300 and Cys-322. Residues Asn-380 and Asn-412 are each glycosylated (N-linked (GlcNAc...) asparagine). Residues 425 to 449 (LVLMVAVVATSTLSLLMVCGVLILV) form a helical membrane-spanning segment. Over 450–864 (KQKKWQGLQE…QNLWNPTYRS (415 aa)) the chain is Cytoplasmic. A Protein kinase domain is found at 510–786 (VTLLRALGHG…LQYCTQDPDV (277 aa)). Residues 516–524 (LGHGAFGEV) and Lys-544 contribute to the ATP site. Residue Asp-643 is the Proton acceptor of the active site. Position 676 is a phosphotyrosine; by autocatalysis (Tyr-676). Disordered stretches follow at residues 790 to 830 (LLPM…KLKS) and 842 to 864 (SGLK…TYRS). Polar residues predominate over residues 852 to 864 (LQPQNLWNPTYRS).

This sequence belongs to the protein kinase superfamily. Tyr protein kinase family. Insulin receptor subfamily. In terms of assembly, homodimer; homodimerizes following ligand-binding. Part of a complex including LTK, TNK2 and GRB2, in which GRB2 promotes LTK recruitment by TNK2. Phosphorylated at tyrosine residues by autocatalysis, which activates kinase activity. In terms of tissue distribution, expressed in non-hematopoietic cell lines and T- and B-cell lines.

The protein resides in the cell membrane. It catalyses the reaction L-tyrosyl-[protein] + ATP = O-phospho-L-tyrosyl-[protein] + ADP + H(+). Activated by ligand-binding, leading to homodimerization and autophosphorylation. In terms of biological role, receptor with a tyrosine-protein kinase activity. Following activation by ALKAL1 or ALKAL2 ligands at the cell surface, transduces an extracellular signal into an intracellular response. Ligand-binding to the extracellular domain induces tyrosine kinase activation, leading to activation of the mitogen-activated protein kinase (MAPK) pathway. Phosphorylates almost exclusively at the first tyrosine of the Y-x-x-x-Y-Y motif. The exact function of this protein is not known; studies with chimeric proteins demonstrate its ability to promote growth and specifically neurite outgrowth, and cell survival. Involved in regulation of the secretory pathway involving endoplasmic reticulum (ER) export sites (ERESs) and ER to Golgi transport. The protein is Leukocyte tyrosine kinase receptor of Homo sapiens (Human).